Reading from the N-terminus, the 197-residue chain is EF-hand calcium-binding domain-containing protein 9 (197 aa).

Residues Asp-58 and Asp-69 each contribute to the Ca(2+) site. 3 consecutive EF-hand domains span residues 59-94 (LKKA…LLAH), 100-135 (GQFM…FLFN), and 136-171 (IQKQ…YTDK). Positions 149, 153, 155, and 160 each coordinate Ca(2+). Positions 177-188 (KTEEKEKGERKR) are enriched in basic and acidic residues. Positions 177-197 (KTEEKEKGERKRSLYSKCHIK) are disordered.

As to quaternary structure, component of the CatSper complex or CatSpermasome composed of the core pore-forming members CATSPER1, CATSPER2, CATSPER3 and CATSPER4 as well as auxiliary members CATSPERB, CATSPERG, CATSPERD, CATSPERE, CATSPERZ, C2CD6/CATSPERT, TMEM249, TMEM262 and EFCAB9. HSPA1 may be an additional auxiliary complex member. The core complex members CATSPER1, CATSPER2, CATSPER3 and CATSPER4 form a heterotetrameric channel. The auxiliary CATSPERB, CATSPERG, CATSPERD and CATSPERE subunits form a pavilion-like structure over the pore which stabilizes the complex through interactions with CATSPER4, CATSPER3, CATSPER1 and CATSPER2 respectively. TMEM262/CATSPERH interacts with CATSPERB, further stabilizing the complex. C2CD6/CATSPERT interacts at least with CATSPERD and is required for targeting the CatSper complex in the flagellar membrane. Interacts with CATSPERZ; the interaction is direct, Ca(2+)-dependent and connects EFCAB9 with the CatSper complex. Dissociates from CATSPERZ at elevated pH.

The protein localises to the cytoplasm. It localises to the cell projection. It is found in the cilium. Its subcellular location is the flagellum. In terms of biological role, auxiliary component of the CatSper complex, a complex involved in sperm cell hyperactivation. pH-dependent Ca(2+) sensor required to activate the CatSper channel. Sperm cell hyperactivation is needed for sperm motility which is essential late in the preparation of sperm for fertilization. Associates with the CatSper complex via direct interaction with CATSPERZ, and senses intracellular Ca(2+). Together with CATSPERZ, associates with the CatSper channel pore and is required for the two-row structure of each single CatSper channel. In Homo sapiens (Human), this protein is EF-hand calcium-binding domain-containing protein 9.